We begin with the raw amino-acid sequence, 61 residues long: Photosystem II reaction center X protein (61 aa).

A helical transmembrane segment spans residues 26–46; the sequence is IGSFIAAALLIVIPATAFLIF.

The protein belongs to the PsbX family. Type 2 subfamily. PSII consists of a core antenna complex that captures photons, and an electron transfer chain that converts photonic excitation into a charge separation. PSII forms dimeric complexes.

The protein resides in the cellular thylakoid membrane. Its function is as follows. Involved in the binding and/or turnover of quinones at the Q(B) site of Photosystem II. This Prochlorococcus marinus (strain MIT 9312) protein is Photosystem II reaction center X protein.